Reading from the N-terminus, the 1074-residue chain is DNA double-strand break repair Rad50 ATPase (1074 aa).

ATP contacts are provided by residues Arg12, 32–38, and Gln142; that span reads NGSGKSS. 2 coiled-coil regions span residues 355–402 and 452–506; these read ELEK…REKA and NLVE…KGLG. The Zinc-hook domain occupies 512 to 611; the sequence is LENLEDFSEL…KITRLKDAKK (100 aa). 2 residues coordinate Zn(2+): Cys559 and Cys562. 4 coiled-coil regions span residues 574 to 611, 649 to 678, 749 to 823, and 865 to 895; these read TAEE…DAKK, LKLE…LQVQ, KEKL…EILE, and TEEK…LKAL. 973 to 978 provides a ligand contact to ATP; the sequence is LLSGGE.

The protein belongs to the SMC family. RAD50 subfamily. Homodimer. Forms a heterotetramer composed of two Mre11 subunits and two Rad50 subunits. Requires Zn(2+) as cofactor.

Its function is as follows. Part of the Rad50/Mre11 complex, which is involved in the early steps of DNA double-strand break (DSB) repair. The complex may facilitate opening of the processed DNA ends to aid in the recruitment of HerA and NurA. Rad50 controls the balance between DNA end bridging and DNA resection via ATP-dependent structural rearrangements of the Rad50/Mre11 complex. This Methanosarcina acetivorans (strain ATCC 35395 / DSM 2834 / JCM 12185 / C2A) protein is DNA double-strand break repair Rad50 ATPase.